Reading from the N-terminus, the 471-residue chain is Cysteine--tRNA ligase (471 aa).

C29 contributes to the Zn(2+) binding site. Residues 31 to 41 carry the 'HIGH' region motif; the sequence is LTVQSEPHVGH. Residues C215, H240, and E244 each contribute to the Zn(2+) site. The 'KMSKS' region signature appears at 271–275; the sequence is KMSKS. K274 lines the ATP pocket.

Belongs to the class-I aminoacyl-tRNA synthetase family. In terms of assembly, monomer. Zn(2+) serves as cofactor.

It is found in the cytoplasm. The catalysed reaction is tRNA(Cys) + L-cysteine + ATP = L-cysteinyl-tRNA(Cys) + AMP + diphosphate. This is Cysteine--tRNA ligase from Nocardioides sp. (strain ATCC BAA-499 / JS614).